The sequence spans 294 residues: GDP-6-deoxy-D-talose 4-dehydrogenase (294 aa).

Residues 11-12 (FI), 38-39 (DL), 60-64 (LAALT), threonine 104, tyrosine 128, lysine 132, and phenylalanine 154 each bind NAD(+). Substrate contacts are provided by threonine 104 and tyrosine 128. Tyrosine 128 functions as the Proton acceptor in the catalytic mechanism. The substrate site is built by asparagine 155 and arginine 190.

It belongs to the NAD(P)-dependent epimerase/dehydratase family.

It catalyses the reaction GDP-6-deoxy-alpha-D-talose + NAD(+) = GDP-4-dehydro-alpha-D-rhamnose + NADH + H(+). The catalysed reaction is GDP-6-deoxy-alpha-D-talose + NADP(+) = GDP-4-dehydro-alpha-D-rhamnose + NADPH + H(+). It functions in the pathway bacterial outer membrane biogenesis; LPS O-antigen biosynthesis. Its function is as follows. Catalyzes the conversion of GDP-4-dehydro-6-deoxy-D-mannose to GDP-6-deoxy-D-talose. In Aggregatibacter actinomycetemcomitans (Actinobacillus actinomycetemcomitans), this protein is GDP-6-deoxy-D-talose 4-dehydrogenase (tld).